Consider the following 417-residue polypeptide: Serine hydroxymethyltransferase (417 aa).

(6S)-5,6,7,8-tetrahydrofolate-binding positions include leucine 121 and 125–127 (GHL). The residue at position 229 (lysine 229) is an N6-(pyridoxal phosphate)lysine. Position 355–357 (355–357 (SPF)) interacts with (6S)-5,6,7,8-tetrahydrofolate.

Belongs to the SHMT family. In terms of assembly, homodimer. The cofactor is pyridoxal 5'-phosphate.

It localises to the cytoplasm. It catalyses the reaction (6R)-5,10-methylene-5,6,7,8-tetrahydrofolate + glycine + H2O = (6S)-5,6,7,8-tetrahydrofolate + L-serine. The protein operates within one-carbon metabolism; tetrahydrofolate interconversion. It functions in the pathway amino-acid biosynthesis; glycine biosynthesis; glycine from L-serine: step 1/1. Its function is as follows. Catalyzes the reversible interconversion of serine and glycine with tetrahydrofolate (THF) serving as the one-carbon carrier. This reaction serves as the major source of one-carbon groups required for the biosynthesis of purines, thymidylate, methionine, and other important biomolecules. Also exhibits THF-independent aldolase activity toward beta-hydroxyamino acids, producing glycine and aldehydes, via a retro-aldol mechanism. The protein is Serine hydroxymethyltransferase of Xanthomonas oryzae pv. oryzae (strain MAFF 311018).